The primary structure comprises 548 residues: Chaperonin GroEL (548 aa).

ATP-binding positions include 30 to 33 (TLGP), Lys-51, 87 to 91 (DGTTT), Gly-415, 479 to 481 (NAA), and Asp-495.

Belongs to the chaperonin (HSP60) family. As to quaternary structure, forms a cylinder of 14 subunits composed of two heptameric rings stacked back-to-back. Interacts with the co-chaperonin GroES.

The protein localises to the cytoplasm. It carries out the reaction ATP + H2O + a folded polypeptide = ADP + phosphate + an unfolded polypeptide.. Its function is as follows. Together with its co-chaperonin GroES, plays an essential role in assisting protein folding. The GroEL-GroES system forms a nano-cage that allows encapsulation of the non-native substrate proteins and provides a physical environment optimized to promote and accelerate protein folding. The sequence is that of Chaperonin GroEL from Pseudomonas fluorescens (strain SBW25).